Here is a 305-residue protein sequence, read N- to C-terminus: Ankyrin repeat domain-containing protein 23 (305 aa).

Residues 41-72 are a coiled coil; it reads QEAVAREKLKLEEEKKKKLERFNSTRFNLDNL. Residues 83–92 show a composition bias toward basic residues; the sequence is KKRLRHRVPP. The tract at residues 83-104 is disordered; sequence KKRLRHRVPPRKPEPLVKPQSQ. 4 ANK repeats span residues 143-172, 176-205, 209-238, and 242-271; these read LHRTALHWACLKGHSQLVNKLLVAGATVDA, LDRTPVFWACRGGHLVILKQLLNQGARVNA, IGSTPLHVAVRTRHPDCLEHLIECGAHLNA, and EGDTALHEAVRHGSYKAMKLLLLYGAELGV. Residues 178–195 are interaction with TTN; the sequence is RTPVFWACRGGHLVILKQ.

In terms of assembly, interacts with titin/TTN and MYPN. Mainly expressed in heart, skeletal muscle and brown adipose tissues.

Its subcellular location is the nucleus. In terms of biological role, may be involved in the energy metabolism. Could be a molecular link between myofibrillar stretch-induced signaling pathways and muscle gene expression. The sequence is that of Ankyrin repeat domain-containing protein 23 (ANKRD23) from Homo sapiens (Human).